We begin with the raw amino-acid sequence, 202 residues long: Small ribosomal subunit protein uS4 (202 aa).

Positions 15–42 are disordered; that stretch reads LGDLPGLTRKAAKRSYPPGQHGQARRKR. The S4 RNA-binding domain occupies 90–152; it reads NRLDNVCFRL…KCSKQLAEGN (63 aa).

This sequence belongs to the universal ribosomal protein uS4 family. As to quaternary structure, part of the 30S ribosomal subunit. Contacts protein S5. The interaction surface between S4 and S5 is involved in control of translational fidelity.

Its function is as follows. One of the primary rRNA binding proteins, it binds directly to 16S rRNA where it nucleates assembly of the body of the 30S subunit. Functionally, with S5 and S12 plays an important role in translational accuracy. The polypeptide is Small ribosomal subunit protein uS4 (Parasynechococcus marenigrum (strain WH8102)).